Reading from the N-terminus, the 332-residue chain is Agamous-like MADS-box protein AGL66 (332 aa).

Residues 1 to 61 (MGRVKLEIKR…DRLSLFSGKT (61 aa)) form the MADS-box domain. Residues 120–151 (TAINSDVEELEHEVYKLQQQLLMAEEELRKYE) adopt a coiled-coil conformation.

As to quaternary structure, forms a heterodimer with AGL30. As to expression, expressed in pollen.

The protein resides in the nucleus. Functionally, probable transcription factor that forms a heterodimer with the MADS-box protein AGL30 and is involved in the regulation of pollen maturation at the late stages of pollen development and pollen tube growth. The protein is Agamous-like MADS-box protein AGL66 of Arabidopsis thaliana (Mouse-ear cress).